Reading from the N-terminus, the 393-residue chain is Formate-dependent phosphoribosylglycinamide formyltransferase (393 aa).

N(1)-(5-phospho-beta-D-ribosyl)glycinamide is bound by residues 22-23 and glutamate 82; that span reads EL. ATP-binding positions include arginine 114, lysine 155, 160-165, 195-198, and glutamate 203; these read SSGHGQ and EGFV. The region spanning 119-308 is the ATP-grasp domain; the sequence is RLAAEELGLP…EFALHARAIL (190 aa). Residues glutamate 267 and glutamate 279 each coordinate Mg(2+). Residues aspartate 286, lysine 356, and 363–364 contribute to the N(1)-(5-phospho-beta-D-ribosyl)glycinamide site; that span reads RR.

It belongs to the PurK/PurT family. Homodimer.

The catalysed reaction is N(1)-(5-phospho-beta-D-ribosyl)glycinamide + formate + ATP = N(2)-formyl-N(1)-(5-phospho-beta-D-ribosyl)glycinamide + ADP + phosphate + H(+). It functions in the pathway purine metabolism; IMP biosynthesis via de novo pathway; N(2)-formyl-N(1)-(5-phospho-D-ribosyl)glycinamide from N(1)-(5-phospho-D-ribosyl)glycinamide (formate route): step 1/1. In terms of biological role, involved in the de novo purine biosynthesis. Catalyzes the transfer of formate to 5-phospho-ribosyl-glycinamide (GAR), producing 5-phospho-ribosyl-N-formylglycinamide (FGAR). Formate is provided by PurU via hydrolysis of 10-formyl-tetrahydrofolate. This Mannheimia succiniciproducens (strain KCTC 0769BP / MBEL55E) protein is Formate-dependent phosphoribosylglycinamide formyltransferase.